The chain runs to 373 residues: Chaperone protein DnaJ (373 aa).

The region spanning 4-69 (DYYETLSVER…SKRRIYDTYG (66 aa)) is the J domain. The segment at 131–209 (GVSKEVKLSR…CHGEGLVKKT (79 aa)) adopts a CR-type zinc-finger fold. Zn(2+) contacts are provided by C144, C147, C161, C164, C183, C186, C197, and C200. CXXCXGXG motif repeat units lie at residues 144–151 (CWTCEGTG), 161–168 (CPTCNGRG), 183–190 (CPECEGEG), and 197–204 (CNDCHGEG).

It belongs to the DnaJ family. As to quaternary structure, homodimer. Zn(2+) is required as a cofactor.

The protein localises to the cytoplasm. Functionally, participates actively in the response to hyperosmotic and heat shock by preventing the aggregation of stress-denatured proteins and by disaggregating proteins, also in an autonomous, DnaK-independent fashion. Unfolded proteins bind initially to DnaJ; upon interaction with the DnaJ-bound protein, DnaK hydrolyzes its bound ATP, resulting in the formation of a stable complex. GrpE releases ADP from DnaK; ATP binding to DnaK triggers the release of the substrate protein, thus completing the reaction cycle. Several rounds of ATP-dependent interactions between DnaJ, DnaK and GrpE are required for fully efficient folding. Also involved, together with DnaK and GrpE, in the DNA replication of plasmids through activation of initiation proteins. This is Chaperone protein DnaJ from Desulfotalea psychrophila (strain LSv54 / DSM 12343).